The sequence spans 347 residues: sn-1 oleoyl-lipid 12-desaturase (347 aa).

Transmembrane regions (helical) follow at residues 41–63 (AWSR…AIAP) and 67–85 (LLPV…FVIG). Positions 86–90 (HDCGH) match the Histidine box-1 motif. Residues 98–118 (WVNNLVGHLAFLPLIYPFHSW) form a helical membrane-spanning segment. Residues 122-126 (HNHHH) carry the Histidine box-2 motif. A run of 3 helical transmembrane segments spans residues 164–184 (LWWL…FAFE), 196–216 (LFVI…LGVW), and 218–238 (VVKF…TFTL). Positions 286–290 (HHLST) match the Histidine box-3 motif.

This sequence belongs to the fatty acid desaturase type 2 family. Fe(2+) serves as cofactor.

The protein localises to the membrane. It carries out the reaction a 1-[(9Z)-octadecenoyl]-2-acyl-glycerolipid + 2 reduced [2Fe-2S]-[ferredoxin] + O2 + 2 H(+) = a 1-[(9Z,12Z)-octadecdienoyl]-2-acyl-glycerolipid + 2 oxidized [2Fe-2S]-[ferredoxin] + 2 H2O. The protein operates within lipid metabolism; polyunsaturated fatty acid biosynthesis. Desaturase involved in fatty acid biosynthesis. Introduces a double bond at carbon 12 of oleoyl groups (18:1) attached to the sn-1 position of the glycerol moiety of membrane glycerolipids. Can also efficiently catalyze the desaturation of palmitoleic acid (16:1) in vitro. In Picosynechococcus sp. (strain ATCC 27264 / PCC 7002 / PR-6) (Agmenellum quadruplicatum), this protein is sn-1 oleoyl-lipid 12-desaturase.